The sequence spans 404 residues: Cysteine desulfurase IscS (404 aa).

Pyridoxal 5'-phosphate-binding positions include 75-76 (AT), Asn155, Gln183, and 203-205 (SGH). At Lys206 the chain carries N6-(pyridoxal phosphate)lysine. Thr243 lines the pyridoxal 5'-phosphate pocket. Cys328 serves as the catalytic Cysteine persulfide intermediate. [2Fe-2S] cluster is bound at residue Cys328.

It belongs to the class-V pyridoxal-phosphate-dependent aminotransferase family. NifS/IscS subfamily. In terms of assembly, homodimer. Forms a heterotetramer with IscU, interacts with other sulfur acceptors. It depends on pyridoxal 5'-phosphate as a cofactor.

It is found in the cytoplasm. It carries out the reaction (sulfur carrier)-H + L-cysteine = (sulfur carrier)-SH + L-alanine. The protein operates within cofactor biosynthesis; iron-sulfur cluster biosynthesis. Its function is as follows. Master enzyme that delivers sulfur to a number of partners involved in Fe-S cluster assembly, tRNA modification or cofactor biosynthesis. Catalyzes the removal of elemental sulfur atoms from cysteine to produce alanine. Functions as a sulfur delivery protein for Fe-S cluster synthesis onto IscU, an Fe-S scaffold assembly protein, as well as other S acceptor proteins. This is Cysteine desulfurase IscS from Shewanella baltica (strain OS155 / ATCC BAA-1091).